Consider the following 637-residue polypeptide: tRNA uridine 5-carboxymethylaminomethyl modification enzyme MnmG (637 aa).

18–23 (GAGHAG) contacts FAD. 282–296 (GPRYCPSIEDKIVRF) contributes to the NAD(+) binding site.

The protein belongs to the MnmG family. As to quaternary structure, homodimer. Heterotetramer of two MnmE and two MnmG subunits. It depends on FAD as a cofactor.

It is found in the cytoplasm. Its function is as follows. NAD-binding protein involved in the addition of a carboxymethylaminomethyl (cmnm) group at the wobble position (U34) of certain tRNAs, forming tRNA-cmnm(5)s(2)U34. This is tRNA uridine 5-carboxymethylaminomethyl modification enzyme MnmG from Pediococcus pentosaceus (strain ATCC 25745 / CCUG 21536 / LMG 10740 / 183-1w).